The sequence spans 213 residues: Peptidyl-tRNA hydrolase (213 aa).

Tyrosine 26 lines the tRNA pocket. Residue histidine 31 is the Proton acceptor of the active site. TRNA contacts are provided by tyrosine 78, asparagine 80, and asparagine 126.

It belongs to the PTH family. In terms of assembly, monomer.

It localises to the cytoplasm. The catalysed reaction is an N-acyl-L-alpha-aminoacyl-tRNA + H2O = an N-acyl-L-amino acid + a tRNA + H(+). Hydrolyzes ribosome-free peptidyl-tRNAs (with 1 or more amino acids incorporated), which drop off the ribosome during protein synthesis, or as a result of ribosome stalling. Functionally, catalyzes the release of premature peptidyl moieties from peptidyl-tRNA molecules trapped in stalled 50S ribosomal subunits, and thus maintains levels of free tRNAs and 50S ribosomes. This is Peptidyl-tRNA hydrolase from Trichormus variabilis (strain ATCC 29413 / PCC 7937) (Anabaena variabilis).